The following is a 491-amino-acid chain: Xaa-Pro aminopeptidase 1 (491 aa).

The disordered stretch occupies residues 1–32 (MAEELTPENPAIPETPEETEEPIKQRKNGLYP). Asp308, Asp320, His403, Glu434, and Glu458 together coordinate Mn(2+).

The protein belongs to the peptidase M24B family. As to quaternary structure, homodimer. Requires Mn(2+) as cofactor.

It catalyses the reaction Release of any N-terminal amino acid, including proline, that is linked to proline, even from a dipeptide or tripeptide.. The chain is Xaa-Pro aminopeptidase 1 (pepPI) from Streptomyces coelicolor (strain ATCC BAA-471 / A3(2) / M145).